Here is a 219-residue protein sequence, read N- to C-terminus: Putative NAD(P)H nitroreductase SSP0379 (219 aa).

Belongs to the nitroreductase family. It depends on FMN as a cofactor.

This chain is Putative NAD(P)H nitroreductase SSP0379, found in Staphylococcus saprophyticus subsp. saprophyticus (strain ATCC 15305 / DSM 20229 / NCIMB 8711 / NCTC 7292 / S-41).